The sequence spans 1455 residues: Fanconi anemia group A protein (1455 aa).

Residues 18 to 34 (RRRAWAELLAGRVKREK) carry the Nuclear localization signal motif. The residue at position 1449 (S1449) is a Phosphoserine.

As to quaternary structure, belongs to the multisubunit FA complex composed of FANCA, FANCB, FANCC, FANCE, FANCF, FANCG, FANCL/PHF9 and FANCM. The complex is not found in FA patients. In complex with FANCF, FANCG and FANCL, but not with FANCC, nor FANCE, interacts with HES1; this interaction may be essential for the stability and nuclear localization of FA core complex proteins. The complex with FANCC and FANCG may also include EIF2AK2 and HSP70. Interacts with FAAP20/C1orf86; interaction is direct. Phosphorylation is required for the formation of the nuclear complex. Not phosphorylated in cells derived from groups A, B, C, E, F, G, and H.

It localises to the nucleus. It is found in the cytoplasm. In terms of biological role, DNA repair protein that may operate in a postreplication repair or a cell cycle checkpoint function. May be involved in interstrand DNA cross-link repair and in the maintenance of normal chromosome stability. This chain is Fanconi anemia group A protein (FANCA), found in Homo sapiens (Human).